Here is a 92-residue protein sequence, read N- to C-terminus: Small ribosomal subunit protein uS19 (92 aa).

It belongs to the universal ribosomal protein uS19 family.

Protein S19 forms a complex with S13 that binds strongly to the 16S ribosomal RNA. The protein is Small ribosomal subunit protein uS19 of Rhizobium rhizogenes (strain K84 / ATCC BAA-868) (Agrobacterium radiobacter).